We begin with the raw amino-acid sequence, 398 residues long: Argininosuccinate synthase (398 aa).

9-17 (AYSGGLDTS) is an ATP binding site. Residue Tyr-85 coordinates L-citrulline. Gly-115 serves as a coordination point for ATP. Thr-117, Asn-121, and Asp-122 together coordinate L-aspartate. Residue Asn-121 coordinates L-citrulline. Arg-125, Ser-173, Glu-258, and Tyr-270 together coordinate L-citrulline.

This sequence belongs to the argininosuccinate synthase family. Type 1 subfamily. As to quaternary structure, homotetramer.

The protein resides in the cytoplasm. The catalysed reaction is L-citrulline + L-aspartate + ATP = 2-(N(omega)-L-arginino)succinate + AMP + diphosphate + H(+). Its pathway is amino-acid biosynthesis; L-arginine biosynthesis; L-arginine from L-ornithine and carbamoyl phosphate: step 2/3. The chain is Argininosuccinate synthase from Streptococcus pneumoniae (strain ATCC BAA-255 / R6).